The chain runs to 474 residues: ATP synthase subunit beta (474 aa).

Residue 153–160 (GGAGVGKT) coordinates ATP.

It belongs to the ATPase alpha/beta chains family. As to quaternary structure, F-type ATPases have 2 components, CF(1) - the catalytic core - and CF(0) - the membrane proton channel. CF(1) has five subunits: alpha(3), beta(3), gamma(1), delta(1), epsilon(1). CF(0) has three main subunits: a(1), b(2) and c(9-12). The alpha and beta chains form an alternating ring which encloses part of the gamma chain. CF(1) is attached to CF(0) by a central stalk formed by the gamma and epsilon chains, while a peripheral stalk is formed by the delta and b chains.

Its subcellular location is the cell inner membrane. The enzyme catalyses ATP + H2O + 4 H(+)(in) = ADP + phosphate + 5 H(+)(out). In terms of biological role, produces ATP from ADP in the presence of a proton gradient across the membrane. The catalytic sites are hosted primarily by the beta subunits. In Rickettsia typhi (strain ATCC VR-144 / Wilmington), this protein is ATP synthase subunit beta.